We begin with the raw amino-acid sequence, 1062 residues long: MNISEDVLSTGSSLASQVHAAAVNGDKGALQRLIVGNSALRDKEDRFGRTPLMYCVLADRVDCADALLKAGADVNKTDHSRRTALHLAAQKGNYRFMKLLLTRRANWMQKDLEEMTPLHLSTRHRSPKCLALLLKFMAPGEVDTQDKNKQTALHWSAYYNNPEHAKLLIKHDSNIGIPDVEGKIPLHWAANHKDPSAVHTVRCILDAAPTESLLNWQDYEGRTPLHFAVADGNLTVVDVLTSYESCNITSYDNLFRTPLHWAALLGHAQIVHLLLERNKSGTIPSDSQGATPLHYAAQSNFAETVKVFLQHPSVKDDSDLEGRTSFMWAAGKGNDDVLRTMLSLKSDIDINMSDKYGGTALHAAALSGHVSTVKLLLDNDAQVDATDVMKHTPLFRACEMGHRDVIQTLIKGGARVDLVDQDGHSLLHWAALGGNADVCQILIENKINPNVQDYAGRTPLQCAAYGGYINCMAVLMENNADPNIQDKEGRTALHWSCNNGYLDAIKLLLDFAAFPNQMENNEERYTPLDYALLGERHEVIQFMLEHGALSIAAIQDIAAFKIQAVYKGYKVRKAFRDRKNLLMKHEQLRKDAAAKKREEENKRKEAEQQKGQLDTDPPRSHCSSSAPVLPCPPSPQNEGSKQDATPSKQPPASHTVQSPDPEHSRLPGRCPGRASQGDSSIDLQGTASRKPSETPIEHCRGPSACVHPRSWEGGNSSKNQGTSSVEKRRGETNGKHRRCEEGPSSARQPLCTGSGRPAEKGEDSSPAVASASQQDHPRKPNKRQDRAARPRGASQKRRTHQLRDRCSPAGSSRPGSAKGEVACADQSSLHRHTPRSKVTQDKLIGGVSSGLPLSTEASRSGCKQLYEDICASPETGVAHGPPPGQCMNIHLLPVEQRLLIIQRERSRKELFRRKNKAAAVIQRAWRSYQLRKHLSRLLHLKQLGAREVLRCTQVCTALLLQVWRKELELKFPKSISVSRTSKSPSKGSSATKYARHSVLRQIYGCSQEGKGHHPIKSSKAPAVLHLSSVNSLQSIHLDNSGRSKKFSYNLQPSSQSKNKPKL.

16 ANK repeats span residues 13–42 (SLASQVHAAAVNGDKGALQRLIVGNSALRD), 47–76 (FGRTPLMYCVLADRVDCADALLKAGADVNK), 80–110 (SRRTALHLAAQKGNYRFMKLLLTRRANWMQK), 113–144 (EEMTPLHLSTRHRSPKCLALLLKFMAPGEVDT), 148–177 (NKQTALHWSAYYNNPEHAKLLIKHDSNIGI), 181–213 (EGKIPLHWAANHKDPSAVHTVRCILDAAPTESL), 220–250 (EGRTPLHFAVADGNLTVVDVLTSYESCNITS), 254–283 (LFRTPLHWAALLGHAQIVHLLLERNKSGTI), 288–317 (QGATPLHYAAQSNFAETVKVFLQHPSVKDD), 321–350 (EGRTSFMWAAGKGNDDVLRTMLSLKSDIDI), 356–385 (YGGTALHAAALSGHVSTVKLLLDNDAQVDA), 389–418 (MKHTPLFRACEMGHRDVIQTLIKGGARVDL), 422–451 (DGHSLLHWAALGGNADVCQILIENKINPNV), 455–484 (AGRTPLQCAAYGGYINCMAVLMENNADPNI), 488–517 (EGRTALHWSCNNGYLDAIKLLLDFAAFPNQ), and 523–553 (ERYTPLDYALLGERHEVIQFMLEHGALSIAA). A 3-hydroxyasparagine modification is found at Asn75. The short motif at 490 to 498 (RTALHWSCN) is the D-box 1 element. Residues 555–584 (QDIAAFKIQAVYKGYKVRKAFRDRKNLLMK) form the IQ 1 domain. Residues 589–608 (RKDAAAKKREEENKRKEAEQ) are compositionally biased toward basic and acidic residues. The interval 589–849 (RKDAAAKKRE…QDKLIGGVSS (261 aa)) is disordered. 2 stretches are compositionally biased toward polar residues: residues 636–658 (QNEGSKQDATPSKQPPASHTVQS) and 676–689 (QGDSSIDLQGTASR). The span at 690–700 (KPSETPIEHCR) shows a compositional bias: basic and acidic residues. The segment covering 713–724 (GGNSSKNQGTSS) has biased composition (polar residues). Basic and acidic residues-rich tracts occupy residues 725 to 741 (VEKRRGETNGKHRRCEE) and 775 to 788 (DHPRKPNKRQDRAA). A D-box 2 motif is present at residues 907 to 915 (RKELFRRKN). An IQ 2 domain is found at 914–943 (KNKAAAVIQRAWRSYQLRKHLSRLLHLKQL). The segment at 1042–1062 (RSKKFSYNLQPSSQSKNKPKL) is disordered. Residues 1046 to 1062 (FSYNLQPSSQSKNKPKL) show a composition bias toward polar residues.

As to quaternary structure, interacts with microtubules. Interacts with NPHP1. Interacts with DVL1, PRICKLE (PRICKLE1 or PRICKLE2) and Strabismus (VANGL1 or VANGL2). Binds calmodulin via its IQ domains. Interacts with APC2. Interacts with alpha-, beta-, and gamma-catenin. Interacts with N-cadherin (CDH2). Interacts with NPHP3. Interacts with IQCB1; the interaction likely requires additional interactors. Component of a complex containing at least ANKS6, INVS, NEK8 and NPHP3. ANKS6 may organize complex assembly by linking INVS and NPHP3 to NEK8 and INVS may target the complex to the proximal ciliary axoneme. In terms of processing, may be ubiquitinated via its interaction with APC2. Hydroxylated at Asn-75, most probably by HIF1AN. In terms of tissue distribution, strongly expressed in the primary cilia of renal cells, especially in the varicosities, swellings observed in the cilia. Localizes in the node monocilia and in other 9+0 monocilia, including those of kidney epithelial cells and the pituitary gland, but it does not localize to 9+2 cilia (at protein level). In adult, it is expressed at high level in liver and kidney. Weakly or not expressed in other tissues.

The protein resides in the cytoplasm. Its subcellular location is the cytoskeleton. It localises to the membrane. The protein localises to the nucleus. It is found in the perinuclear region. The protein resides in the spindle. Required for normal renal development and establishment of left-right axis. Probably acts as a molecular switch between different Wnt signaling pathways. Inhibits the canonical Wnt pathway by targeting cytoplasmic disheveled (DVL1) for degradation by the ubiquitin-proteasome. This suggests that it is required in renal development to oppose the repression of terminal differentiation of tubular epithelial cells by Wnt signaling. Involved in the organization of apical junctions in kidney cells together with NPHP1, NPHP4 and RPGRIP1L/NPHP8. Does not seem to be strictly required for ciliogenesis. This chain is Inversin (Invs), found in Mus musculus (Mouse).